Reading from the N-terminus, the 74-residue chain is Putative defensin-like protein 128 (74 aa).

Residues 1 to 24 (MSKLTNVVIFIVFFLGMMAKETQG) form the signal peptide. Disulfide bonds link Cys-28–Cys-72, Cys-37–Cys-56, Cys-42–Cys-66, and Cys-46–Cys-68.

This sequence belongs to the DEFL family.

Its subcellular location is the secreted. The protein is Putative defensin-like protein 128 (LCR8) of Arabidopsis thaliana (Mouse-ear cress).